The sequence spans 271 residues: Inactive phospholipid phosphatase 7 (271 aa).

The segment at 1–69 (MPVSQSRARA…RQSQQLPEED (69 aa)) is disordered. The Cytoplasmic portion of the chain corresponds to 1–112 (MPVSQSRARA…AASWASARSM (112 aa)). A compositionally biased stretch (polar residues) spans 24–36 (SLNQPPKGTQEPR). Residues serine 43 and serine 62 each carry the phosphoserine modification. The interval 70–91 (CMQLNPSFKGIAFNSLLAIDIC) is interaction with MTOR. Residues 113–133 (VKLIGITSHGIPWIGGTILCL) form a helical membrane-spanning segment. Residues 134–141 (VRSSTLAG) are Extracellular-facing. A helical transmembrane segment spans residues 142–162 (QEVLMNLLLALLLDIMTVAGV). Topologically, residues 163 to 202 (QKLIKRRGPYETSPGLLDYLTMDIYAFPAGHASRAAMVSK) are cytoplasmic. A helical transmembrane segment spans residues 203–223 (FFLSHLVLAVPLRVLLVLWAF). At 224–239 (CVGLSRVMIGRHHITD) the chain is on the extracellular side. A helical transmembrane segment spans residues 240-260 (VISGFIIGYFQFRLVELVWMS). Topologically, residues 261-271 (SNTCQMLISAW) are cytoplasmic.

The protein belongs to the PA-phosphatase related phosphoesterase family. As to quaternary structure, homo- and heterooligomer. Interacts with MTOR; controls MTOR-dependent IGF2 expression during myoblast differentiation.

The protein localises to the nucleus envelope. The protein resides in the endoplasmic reticulum membrane. It is found in the membrane. In terms of biological role, plays a role as negative regulator of myoblast differentiation, in part through effects on MTOR signaling. Has no detectable enzymatic activity. The sequence is that of Inactive phospholipid phosphatase 7 from Rattus norvegicus (Rat).